A 256-amino-acid chain; its full sequence is N-acetylglucosaminyldiphosphoundecaprenol N-acetyl-beta-D-mannosaminyltransferase (256 aa).

The protein belongs to the glycosyltransferase 26 family. TagA/TarA subfamily.

The enzyme catalyses UDP-N-acetyl-alpha-D-mannosamine + N-acetyl-alpha-D-glucosaminyl-di-trans,octa-cis-undecaprenyl diphosphate = N-acetyl-beta-D-mannosaminyl-(1-&gt;4)-N-acetyl-alpha-D-glucosaminyl di-trans,octa-cis-undecaprenyl diphosphate + UDP + H(+). It functions in the pathway cell wall biogenesis; poly(glycerol phosphate) teichoic acid biosynthesis. Its function is as follows. Catalyzes the conversion of GlcNAc-PP-undecaprenol into ManNAc-GlcNAc-PP-undecaprenol, the first committed lipid intermediate in the de novo synthesis of teichoic acid. The protein is N-acetylglucosaminyldiphosphoundecaprenol N-acetyl-beta-D-mannosaminyltransferase of Bacillus subtilis (strain 168).